We begin with the raw amino-acid sequence, 415 residues long: 3-isopropylmalate dehydratase large subunit (415 aa).

Residues C297, C355, and C358 each coordinate [4Fe-4S] cluster.

It belongs to the aconitase/IPM isomerase family. LeuC type 2 subfamily. In terms of assembly, heterodimer of LeuC and LeuD. Requires [4Fe-4S] cluster as cofactor.

It catalyses the reaction (2R,3S)-3-isopropylmalate = (2S)-2-isopropylmalate. Its pathway is amino-acid biosynthesis; L-leucine biosynthesis; L-leucine from 3-methyl-2-oxobutanoate: step 2/4. Its function is as follows. Catalyzes the isomerization between 2-isopropylmalate and 3-isopropylmalate, via the formation of 2-isopropylmaleate. In Metallosphaera sedula (strain ATCC 51363 / DSM 5348 / JCM 9185 / NBRC 15509 / TH2), this protein is 3-isopropylmalate dehydratase large subunit.